The chain runs to 324 residues: ATP-dependent 6-phosphofructokinase (324 aa).

Residue glycine 11 coordinates ATP. Residue 21–25 participates in ADP binding; sequence RAVVR. ATP-binding positions include 72 to 73 and 102 to 105; these read RE and GNGS. Residue asparagine 103 coordinates Mg(2+). 126 to 128 contributes to the substrate binding site; sequence TID. Residue aspartate 128 is the Proton acceptor of the active site. Lysine 155 contributes to the ADP binding site. Substrate-binding positions include arginine 163 and 170 to 172; that span reads MGR. Residues 186 to 188 and 214 to 216 each bind ADP; these read GAE and KNF. Residues glutamate 223, arginine 248, and 254–257 each bind substrate; that span reads YIQR.

Belongs to the phosphofructokinase type A (PFKA) family. ATP-dependent PFK group I subfamily. Prokaryotic clade 'B1' sub-subfamily. As to quaternary structure, homotetramer. It depends on Mg(2+) as a cofactor.

The protein resides in the cytoplasm. It catalyses the reaction beta-D-fructose 6-phosphate + ATP = beta-D-fructose 1,6-bisphosphate + ADP + H(+). It participates in carbohydrate degradation; glycolysis; D-glyceraldehyde 3-phosphate and glycerone phosphate from D-glucose: step 3/4. Allosterically activated by ADP and other diphosphonucleosides, and allosterically inhibited by phosphoenolpyruvate. In terms of biological role, catalyzes the phosphorylation of D-fructose 6-phosphate to fructose 1,6-bisphosphate by ATP, the first committing step of glycolysis. The sequence is that of ATP-dependent 6-phosphofructokinase from Sulfurihydrogenibium sp. (strain YO3AOP1).